The sequence spans 78 residues: Apolipoprotein C-I (78 aa).

The N-terminal stretch at 1 to 26 (MRLILWLPVLVVVLLMVLEGPAPAQG) is a signal peptide.

The protein belongs to the apolipoprotein C1 family.

Its subcellular location is the secreted. In terms of biological role, inhibitor of lipoprotein binding to the low density lipoprotein (LDL) receptor, LDL receptor-related protein, and very low density lipoprotein (VLDL) receptor. Associates with high density lipoproteins (HDL) and the triacylglycerol-rich lipoproteins in the plasma and makes up about 10% of the protein of the VLDL and 2% of that of HDL. Appears to interfere directly with fatty acid uptake and is also the major plasma inhibitor of cholesteryl ester transfer protein (CETP). Binds free fatty acids and reduces their intracellular esterification. Modulates the interaction of APOE with beta-migrating VLDL and inhibits binding of beta-VLDL to the LDL receptor-related protein. The polypeptide is Apolipoprotein C-I (APOC1) (Lynx pardinus (Iberian lynx)).